The following is a 431-amino-acid chain: GTPase Obg (431 aa).

Residues 1–158 (MFVDQVKISL…IEVTLELKLL (158 aa)) enclose the Obg domain. Positions 118–144 (KGGRGGRGNSRFASPRNPAPDFSENGE) are disordered. The region spanning 159-330 (ADVGLVGFPS…LLYAIADKLE (172 aa)) is the OBG-type G domain. GTP contacts are provided by residues 165 to 172 (GFPSVGKS), 190 to 194 (FTTIK), 212 to 215 (DLPG), 282 to 285 (NKMD), and 311 to 313 (STF). Mg(2+) is bound by residues S172 and T192. The region spanning 353–431 (KHTPSQDKFT…ILGGEFEFVE (79 aa)) is the OCT domain.

This sequence belongs to the TRAFAC class OBG-HflX-like GTPase superfamily. OBG GTPase family. Monomer. Mg(2+) serves as cofactor.

It localises to the cytoplasm. Functionally, an essential GTPase which binds GTP, GDP and possibly (p)ppGpp with moderate affinity, with high nucleotide exchange rates and a fairly low GTP hydrolysis rate. Plays a role in control of the cell cycle, stress response, ribosome biogenesis and in those bacteria that undergo differentiation, in morphogenesis control. The sequence is that of GTPase Obg from Staphylococcus saprophyticus subsp. saprophyticus (strain ATCC 15305 / DSM 20229 / NCIMB 8711 / NCTC 7292 / S-41).